The chain runs to 251 residues: Probable transcriptional regulatory protein jk1057 (251 aa).

The interval Met1–Gly22 is disordered.

This sequence belongs to the TACO1 family.

Its subcellular location is the cytoplasm. The chain is Probable transcriptional regulatory protein jk1057 from Corynebacterium jeikeium (strain K411).